The chain runs to 358 residues: Histidinol-phosphate aminotransferase (358 aa).

Position 218 is an N6-(pyridoxal phosphate)lysine (K218).

The protein belongs to the class-II pyridoxal-phosphate-dependent aminotransferase family. Histidinol-phosphate aminotransferase subfamily. Homodimer. Requires pyridoxal 5'-phosphate as cofactor.

The enzyme catalyses L-histidinol phosphate + 2-oxoglutarate = 3-(imidazol-4-yl)-2-oxopropyl phosphate + L-glutamate. It functions in the pathway amino-acid biosynthesis; L-histidine biosynthesis; L-histidine from 5-phospho-alpha-D-ribose 1-diphosphate: step 7/9. The sequence is that of Histidinol-phosphate aminotransferase from Dehalococcoides mccartyi (strain ATCC BAA-2266 / KCTC 15142 / 195) (Dehalococcoides ethenogenes (strain 195)).